The chain runs to 92 residues: Putative regulatory protein CKL_1364 (92 aa).

This sequence belongs to the RemA family.

This Clostridium kluyveri (strain ATCC 8527 / DSM 555 / NBRC 12016 / NCIMB 10680 / K1) protein is Putative regulatory protein CKL_1364.